Reading from the N-terminus, the 347-residue chain is GMP reductase (347 aa).

108-131 (ADFQKTKDVMALSDELIFICIDIA) lines the NADP(+) pocket. Positions 181 and 183 each coordinate K(+). Catalysis depends on cysteine 186, which acts as the Thioimidate intermediate. Residue 216 to 239 (IIGDGGCTCPGDVAKAFGGGADFV) participates in NADP(+) binding.

The protein belongs to the IMPDH/GMPR family. GuaC type 1 subfamily. In terms of assembly, homotetramer.

It catalyses the reaction IMP + NH4(+) + NADP(+) = GMP + NADPH + 2 H(+). Its function is as follows. Catalyzes the irreversible NADPH-dependent deamination of GMP to IMP. It functions in the conversion of nucleobase, nucleoside and nucleotide derivatives of G to A nucleotides, and in maintaining the intracellular balance of A and G nucleotides. This Vibrio cholerae serotype O1 (strain ATCC 39541 / Classical Ogawa 395 / O395) protein is GMP reductase.